Reading from the N-terminus, the 337-residue chain is Phosphate acyltransferase (337 aa).

It belongs to the PlsX family. As to quaternary structure, homodimer. Probably interacts with PlsY.

The protein resides in the cytoplasm. It carries out the reaction a fatty acyl-[ACP] + phosphate = an acyl phosphate + holo-[ACP]. Its pathway is lipid metabolism; phospholipid metabolism. In terms of biological role, catalyzes the reversible formation of acyl-phosphate (acyl-PO(4)) from acyl-[acyl-carrier-protein] (acyl-ACP). This enzyme utilizes acyl-ACP as fatty acyl donor, but not acyl-CoA. In Halalkalibacterium halodurans (strain ATCC BAA-125 / DSM 18197 / FERM 7344 / JCM 9153 / C-125) (Bacillus halodurans), this protein is Phosphate acyltransferase.